Reading from the N-terminus, the 333-residue chain is MRLFREIAANDPGPTGRMKNMKTFTTALATGVLALCPLAALADSSDPIVIPIHNWSSQIVMSNVVGQIFEEMGVAVEFVTTDSQAVYESVRLGDVTLELEVWEGAFGASFRAALEKGGIVDVGDHDAVTREDWWYPMWTKDACPGLPDWKALNDCAAVFATAETGDKGRYLDGPVDWLKHGKERVEALGMNFEVINAGSAAALWAEIGAAEADKRPVVVFNWTPNFAEAVWPGEFVEFPEWVDGCDKDPAVGPNPDALYDCGNPATGYLKKAAWEGMEAKWPDAYAVLTRISFTNPQIAEMAKLVDVDEMEPDEAAEAWLEANEDVWRPWLDG.

The first 42 residues, 1 to 42 (MRLFREIAANDPGPTGRMKNMKTFTTALATGVLALCPLAALA), serve as a signal peptide directing secretion. The trimethylamine N-oxide site is built by Trp-55, Trp-102, Glu-131, Trp-177, and Trp-222. Positions 249, 251, 254, 257, and 260 each coordinate Ca(2+).

In terms of assembly, the complex is probably composed of two ATP-binding proteins (TmoW), two transmembrane proteins (TmoV) and a solute-binding protein (TmoX). Monomer in solution, but forms homodimers in crystals.

It is found in the periplasm. Binds a Ca(2+) ion, which has little effect on either the binding affinity or the secondary structure, but plays an important role in maintaining the stability of TmoX. It may modulate the protein stability in response to biological needs and environmental changes. Thermostability is dramatically decreased when Ca(2+) is removed by EDTA. Functionally, part of the ABC transporter complex TmoXWV involved in trimethylamine N-oxide (TMAO) import. Is specific for TMAO and essential for TMAO metabolism. Binds TMAO with high affinity. In vitro, also presents a high binding affinity for choline, however this transporter seems specific for TMAO and the choline-binding affinity presented by recombinant TmoX may not make physiological sense. The polypeptide is Trimethylamine N-oxide-binding protein (Ruegeria pomeroyi (strain ATCC 700808 / DSM 15171 / DSS-3) (Silicibacter pomeroyi)).